The sequence spans 527 residues: UPF0053 protein YegH (527 aa).

The next 7 helical transmembrane spans lie at 14-34, 51-71, 81-101, 122-142, 145-165, 185-205, and 207-227; these read ITLI…IAIL, LLLA…LVTL, FTFS…LFKA, GAKF…FSLD, ITAV…VIAI, IVIL…AEGF, and FVIP…IEAL. CBS domains are found at residues 306–366 and 371–429; these read MTSR…GEPL and LIRQ…PNEV.

It belongs to the UPF0053 family.

Its subcellular location is the cell membrane. This is UPF0053 protein YegH (yegH) from Shigella flexneri.